A 1784-amino-acid chain; its full sequence is Sodium channel protein type 4 subunit alpha B (1784 aa).

At 1-130 the chain is on the cytoplasmic side; it reads MARLLPPTGT…RAAIRILIHS (130 aa). The interval 29-48 is disordered; that stretch reads AEEAAEQERMKEQNVKVAEE. An I repeat occupies 112 to 429; the sequence is CLSPFNPVRR…VVAMAYAEQN (318 aa). The helical transmembrane segment at 131-149 threads the bilayer; it reads LFSLVIMLTILTNCVFMAM. Residues 150 to 156 lie on the Extracellular side of the membrane; that stretch reads SDPPGWS. A helical transmembrane segment spans residues 157 to 177; sequence KILEYVFTGIYTFEAMVKVLS. Topologically, residues 178–191 are cytoplasmic; that stretch reads RGFCIGDFTFLRDP. A helical membrane pass occupies residues 192 to 209; that stretch reads WNWLDFMVISMAYLTEFV. Over 210–215 the chain is Extracellular; sequence DLGNIS. The N-linked (GlcNAc...) asparagine glycan is linked to Asn-213. Residues 216–232 form a helical membrane-spanning segment; sequence ALRTFRVLRALKTITVI. Over 233–251 the chain is Cytoplasmic; sequence PGLKTIVGALIQSVKKLAD. The helical transmembrane segment at 252 to 271 threads the bilayer; sequence VMILTVFCLSVFALIGLQLF. Topologically, residues 272 to 366 are extracellular; sequence MGNLRQKCVL…PNYGYTSYDN (95 aa). Residues Cys-279 and Cys-335 are joined by a disulfide bond. N-linked (GlcNAc...) asparagine glycans are attached at residues Asn-291, Asn-304, and Asn-337. Residues Cys-344 and Cys-350 are joined by a disulfide bond. An intramembrane region (pore-forming) is located at residues 367–391; that stretch reads FGWAFLALFRLMTQDFWENLFQLTL. Topologically, residues 392 to 398 are extracellular; that stretch reads RAAGKTY. The chain crosses the membrane as a helical span at residues 399–419; it reads MIFFVVIIFLGSFYLINLILA. Residues 420–568 lie on the Cytoplasmic side of the membrane; the sequence is VVAMAYAEQN…RIVYLFVMDP (149 aa). A disordered region spans residues 455–478; the sequence is EQKNGMVNGSKTSLSSKKKGDNDQ. An II repeat occupies 550-821; the sequence is CCIPWVKFKR…QIAISRITRG (272 aa). The chain crosses the membrane as a helical span at residues 569–587; that stretch reads FVDLGITLCIVLNTVFMAM. Over 588–598 the chain is Extracellular; sequence EHYPMSVHVEE. Residues 599–618 traverse the membrane as a helical segment; that stretch reads VLAIGNLVFTGIFAAEMVLK. The Cytoplasmic segment spans residues 619–632; it reads LIALDPYYYFQVGW. A helical transmembrane segment spans residues 633-652; that stretch reads NIFDSIIVTMSLVELMLADV. Over 653-654 the chain is Extracellular; the sequence is EG. Residues 655 to 672 traverse the membrane as a helical segment; the sequence is LSVLRSFRLMRVFKLAKS. Topologically, residues 673–688 are cytoplasmic; sequence WPTLNMLIKIIGNSVG. A helical membrane pass occupies residues 689–707; the sequence is ALGNLTLVLAIIVFIFAVV. Topologically, residues 708–736 are extracellular; sequence GMQLFGKSYTDSVCKISSDCELPRWHMAD. Residues Cys-721 and Cys-727 are joined by a disulfide bond. An intramembrane region (pore-forming) is located at residues 737–757; that stretch reads FFHAFLIIFRVLCGEWIETMW. The Extracellular portion of the chain corresponds to 758–768; the sequence is DCMEVAGQGMC. Cys-759 and Cys-768 are oxidised to a cystine. A helical membrane pass occupies residues 769–787; that stretch reads IIVFMMVMVIGNLVVLNLF. The Cytoplasmic portion of the chain corresponds to 788 to 973; that stretch reads LALLLSSFSG…TCFAIVEHSY (186 aa). Positions 870 to 928 are disordered; sequence PIANGESDDDDGNGSSEDEDDEGRDINMKKKNGDESSTCSTVDKPPEVEDLVEEEEEDL. Positions 875–892 are enriched in acidic residues; the sequence is ESDDDDGNGSSEDEDDEG. The segment covering 893–903 has biased composition (basic and acidic residues); that stretch reads RDINMKKKNGD. Residues 917 to 928 show a composition bias toward acidic residues; the sequence is VEDLVEEEEEDL. The stretch at 954–1269 is one III repeat; it reads KGKAWWNFRK…KKYYNAMKKL (316 aa). The helical transmembrane segment at 974–991 threads the bilayer; it reads FETFIIFMILLSSGALAF. Residues 992–1004 are Extracellular-facing; it reads EDIYIEQRRMIKI. Residues 1005–1023 traverse the membrane as a helical segment; the sequence is ILEYADQVFTYVFVVEMLL. Topologically, residues 1024–1037 are cytoplasmic; it reads KWVAYGFKVYFTNA. A helical transmembrane segment spans residues 1038–1056; the sequence is WCWLDFLIVDVSLISLTAN. At 1057 to 1064 the chain is on the extracellular side; the sequence is ILGYSELG. A helical transmembrane segment spans residues 1065–1083; that stretch reads AIKSLRTLRALRPLRALSR. Over 1084-1101 the chain is Cytoplasmic; the sequence is FEGMRVVVVNALVGAIPS. Residues 1102-1121 traverse the membrane as a helical segment; that stretch reads IFNVLLVCLIFWLIFSIMGV. Residues 1122–1173 are Extracellular-facing; that stretch reads NLFAGKFYYCFNETSEEVFDHNVVNNKTDCYELMEFHPEVRWMNGKINFDNV. A disulfide bridge links Cys-1131 with Cys-1151. Residues Asn-1133 and Asn-1147 are each glycosylated (N-linked (GlcNAc...) asparagine). Positions 1174-1195 form an intramembrane region, pore-forming; it reads GMGYLALLQVATFKGWMDIMYS. At 1196–1212 the chain is on the extracellular side; it reads AVDSRAIESQPVYEANL. The chain crosses the membrane as a helical span at residues 1213–1234; it reads YMYIYFVIFIIFGSFFTLNLFI. Topologically, residues 1235 to 1297 are cytoplasmic; it reads GVIIDNFNQQ…LVFDFVTQQF (63 aa). Residues 1253–1255 form an important for rapid channel inactivation region; sequence IFM. The IV repeat unit spans residues 1278–1575; it reads IPRPTNCCQG…WEKFDPTASQ (298 aa). Residues 1298 to 1315 form a helical membrane-spanning segment; sequence FDIFIMVMICLNMVTMMV. Residues 1316–1326 are Extracellular-facing; it reads ETDDQSAEIEE. A helical membrane pass occupies residues 1327–1345; sequence ILFYINFAFIILFTGECVL. Topologically, residues 1346–1357 are cytoplasmic; sequence KITALRYHYFSI. The chain crosses the membrane as a helical span at residues 1358–1375; that stretch reads GWNIFDFVVVILSILGIG. The Extracellular segment spans residues 1376 to 1388; that stretch reads LADLIEKYFVSPT. Residues 1389 to 1405 traverse the membrane as a helical segment; sequence LFRVIRLARIGRVLRLI. Residues 1406-1424 are Cytoplasmic-facing; sequence RGAKGIRTLLFALMMSLPA. Residues 1425 to 1442 form a helical membrane-spanning segment; the sequence is LFNIGLLLFLIMFIFSIF. Residues 1443–1464 lie on the Extracellular side of the membrane; it reads GMSNFAYVKKEVGIDDMMNFET. The pore-forming intramembrane region spans 1465-1487; that stretch reads FGNSIICMFMITTSAGWDGLLAP. Topologically, residues 1488–1516 are extracellular; the sequence is ILNSPPDCDPDVDNPGSTTRGNCGNAAVG. Cys-1495 and Cys-1510 are oxidised to a cystine. The chain crosses the membrane as a helical span at residues 1517–1539; it reads IVFFCSYIVMSFLVVVNMYIAII. Over 1540 to 1784 the chain is Cytoplasmic; the sequence is LENFNVATEE…AADNLRESIV (245 aa). Residues 1669-1698 enclose the IQ domain; that stretch reads EEVAASTIQRAYRSHILKRCVKQASYMYRD.

The protein belongs to the sodium channel (TC 1.A.1.10) family. Nav1.4/SCN4A subfamily. Voltage-gated sodium (Nav) channels consist of an ion-conducting alpha subunit which is functional on its own associated with regulatory beta subunits. In terms of processing, lacks the cysteine which covalently binds the conotoxin GVIIJ. This cysteine (position 719) is speculated in other sodium channel subunits alpha to be implied in covalent binding with the sodium channel subunit beta-2 or beta-4. As to expression, expressed in skeletal muscle, heart, brain, spinal cord, and eye.

Its subcellular location is the cell membrane. It catalyses the reaction Na(+)(in) = Na(+)(out). Its function is as follows. Pore-forming subunit of a voltage-gated sodium (Nav) channel that directly mediates the depolarizing phase of action potentials in excitable membranes. Navs, also called VGSCs (voltage-gated sodium channels) or VDSCs (voltage-dependent sodium channels), operate by switching between closed and open conformations depending on the voltage difference across the membrane. In the open conformation they allow Na(+) ions to selectively pass through the pore, along their electrochemical gradient. The influx of Na+ ions provokes membrane depolarization, initiating the propagation of electrical signals throughout cells and tissues. In Danio rerio (Zebrafish), this protein is Sodium channel protein type 4 subunit alpha B (scn4ab).